Here is a 961-residue protein sequence, read N- to C-terminus: DNA replication licensing factor MCM2 (961 aa).

Positions 1 to 17 (MDDSENNAPSTPGSPGF) are enriched in polar residues. Disordered regions lie at residues 1-81 (MDDS…FNDN) and 120-220 (AEAE…EEDE). Residues 39-78 (SDDDDDDVVGAEEAEVDPNVLPEDDGVVAAEEEEDGEDLF) show a composition bias toward acidic residues. Basic and acidic residues-rich tracts occupy residues 120 to 146 (AEAELDARDVRTGAAPDRKLPRMLHDQ) and 166 to 176 (PPREPRTPRSD). Positions 205-220 (QTDDDPYEDEFDEEDE) are enriched in acidic residues. The C4-type zinc finger occupies 380–406 (CSKCGTVLGPFFQNSYTEVKVGSCPEC). The region spanning 524-730 (IGERIVKSIA…FTDEMLARFV (207 aa)) is the MCM domain. 574-581 (GDPGTAKS) contacts ATP. An Arginine finger motif is present at residues 706 to 709 (SRFD).

Belongs to the MCM family. As to quaternary structure, component of the minichromosome maintenance (MCM) complex, a heterotetramer composed of MCM2, MCM3, MCM4, MCM5, MCM6 and MCM7. Interacts with CSN5. As to expression, widely expressed, with higher expression in developing tissues.

The protein resides in the nucleus. It carries out the reaction ATP + H2O = ADP + phosphate + H(+). Probable component of the MCM2-7 complex (MCM complex) that may function as a DNA helicase and which is essential to undergo a single round of replication initiation and elongation per cell cycle in eukaryotic cells. Can complement the fission yeast mcm2 mutant. The protein is DNA replication licensing factor MCM2 of Oryza sativa subsp. japonica (Rice).